A 220-amino-acid polypeptide reads, in one-letter code: dITP/XTP pyrophosphatase (220 aa).

13 to 18 (SHNAGK) contributes to the substrate binding site. D45 and D74 together coordinate Mg(2+). Residue D74 is the Proton acceptor of the active site. Substrate contacts are provided by residues S75, 163-166 (FGYD), K186, and 199-200 (HR).

Belongs to the HAM1 NTPase family. As to quaternary structure, homodimer. Requires Mg(2+) as cofactor.

It catalyses the reaction XTP + H2O = XMP + diphosphate + H(+). It carries out the reaction dITP + H2O = dIMP + diphosphate + H(+). The catalysed reaction is ITP + H2O = IMP + diphosphate + H(+). Functionally, pyrophosphatase that catalyzes the hydrolysis of nucleoside triphosphates to their monophosphate derivatives, with a high preference for the non-canonical purine nucleotides XTP (xanthosine triphosphate), dITP (deoxyinosine triphosphate) and ITP. Seems to function as a house-cleaning enzyme that removes non-canonical purine nucleotides from the nucleotide pool, thus preventing their incorporation into DNA/RNA and avoiding chromosomal lesions. This is dITP/XTP pyrophosphatase from Brucella melitensis biotype 1 (strain ATCC 23456 / CCUG 17765 / NCTC 10094 / 16M).